Consider the following 537-residue polypeptide: Chaperonin GroEL (537 aa).

Residues 29 to 32 (TLGP), 86 to 90 (DGTTT), Gly413, and Asp492 contribute to the ATP site.

This sequence belongs to the chaperonin (HSP60) family. In terms of assembly, forms a cylinder of 14 subunits composed of two heptameric rings stacked back-to-back. Interacts with the co-chaperonin GroES.

It localises to the cytoplasm. It catalyses the reaction ATP + H2O + a folded polypeptide = ADP + phosphate + an unfolded polypeptide.. In terms of biological role, together with its co-chaperonin GroES, plays an essential role in assisting protein folding. The GroEL-GroES system forms a nano-cage that allows encapsulation of the non-native substrate proteins and provides a physical environment optimized to promote and accelerate protein folding. The polypeptide is Chaperonin GroEL (Dehalococcoides mccartyi (strain ATCC BAA-2266 / KCTC 15142 / 195) (Dehalococcoides ethenogenes (strain 195))).